The following is a 231-amino-acid chain: Ribosyldihydronicotinamide dehydrogenase [quinone] (231 aa).

FAD-binding positions include H12 and 18–21; that span reads FNGS. S80 carries the post-translational modification Phosphoserine. 104 to 107 is an FAD binding site; sequence LYWF. Residue 127 to 129 coordinates substrate; the sequence is FDI. Residues 148–151 and Y156 each bind FAD; that span reads TTGG. 2 residues coordinate Zn(2+): H174 and H178. E194 contributes to the FAD binding site. The residue at position 197 (S197) is a Phosphoserine. R201 is a binding site for FAD. C223 contacts Zn(2+).

The protein belongs to the NAD(P)H dehydrogenase (quinone) family. In terms of assembly, homodimer. It depends on Zn(2+) as a cofactor. FAD is required as a cofactor.

It localises to the cytoplasm. The catalysed reaction is 1-(beta-D-ribofuranosyl)-1,4-dihydronicotinamide + a quinone + H(+) = beta-nicotinamide D-riboside + a quinol. Functionally, the enzyme apparently serves as a quinone reductase in connection with conjugation reactions of hydroquinones involved in detoxification pathways as well as in biosynthetic processes such as the vitamin K-dependent gamma-carboxylation of glutamate residues in prothrombin synthesis. The sequence is that of Ribosyldihydronicotinamide dehydrogenase [quinone] (NQO2) from Pongo abelii (Sumatran orangutan).